Here is a 193-residue protein sequence, read N- to C-terminus: Cytidylate kinase (193 aa).

Residue 12–20 (GLAGSGTTT) participates in ATP binding.

It belongs to the cytidylate kinase family. Type 2 subfamily.

It is found in the cytoplasm. It catalyses the reaction CMP + ATP = CDP + ADP. The catalysed reaction is dCMP + ATP = dCDP + ADP. The polypeptide is Cytidylate kinase (Thermococcus kodakarensis (strain ATCC BAA-918 / JCM 12380 / KOD1) (Pyrococcus kodakaraensis (strain KOD1))).